A 325-amino-acid polypeptide reads, in one-letter code: Alkanal monooxygenase beta chain (325 aa).

It belongs to the bacterial luciferase oxidoreductase family. As to quaternary structure, heterodimer of an alpha and a beta chain.

It catalyses the reaction a long-chain fatty aldehyde + FMNH2 + O2 = a long-chain fatty acid + hnu + FMN + H2O + 2 H(+). Functionally, light-emitting reaction in luminous bacteria. The specific role of the beta subunit is unknown, but it is absolutely required for bioluminescence activity. The chain is Alkanal monooxygenase beta chain (luxB) from Photobacterium leiognathi.